A 118-amino-acid polypeptide reads, in one-letter code: Galanin peptides (118 aa).

The first 19 residues, 1-19 (MHRCVGGVCVSLIVCAFLT), serve as a signal peptide directing secretion. Positions 20–30 (ETLGMVIAAKE) are excised as a propeptide. An Alanine amide modification is found at Ala-61.

Belongs to the galanin family. As to expression, strongly expressed in brain and stomach, moderately in the eye, and very weakly in heart, kidney and gills. Not detected in liver.

It localises to the secreted. Functionally, endocrine hormone of the central and peripheral nervous systems that binds and activates the G protein-coupled receptors GALR1 (galr1a and galr1b) and GALR2 (galr2a and galr2b). This small neuropeptide may regulate diverse physiologic functions including contraction of smooth muscle of the gastrointestinal and genitourinary tract, growth hormone and insulin release and adrenal secretion. The sequence is that of Galanin peptides from Danio rerio (Zebrafish).